The sequence spans 139 residues: Small ribosomal subunit protein bS6 (139 aa).

Residues 120 to 139 (KGASKVETPTGPESTDIQEK) are disordered. Residues 130–139 (GPESTDIQEK) are compositionally biased toward polar residues.

Belongs to the bacterial ribosomal protein bS6 family.

In terms of biological role, binds together with bS18 to 16S ribosomal RNA. The chain is Small ribosomal subunit protein bS6 (rpsF) from Borreliella burgdorferi (strain ATCC 35210 / DSM 4680 / CIP 102532 / B31) (Borrelia burgdorferi).